Here is a 197-residue protein sequence, read N- to C-terminus: Holliday junction branch migration complex subunit RuvA (197 aa).

The tract at residues 1–63 is domain I; sequence MYAYLKGIIT…EDAHLLYGFR (63 aa). The interval 64-142 is domain II; that stretch reads SEDEKKLFLS…VAGDDLPAKV (79 aa). The interval 143–147 is flexible linker; it reads AVQAS. Residues 148 to 197 form a domain III region; it reads AENQELEEAMEAMLALGYKATELKKIKKFFEGTTDTAENYIKSALKMLVK.

It belongs to the RuvA family. In terms of assembly, homotetramer. Forms an RuvA(8)-RuvB(12)-Holliday junction (HJ) complex. HJ DNA is sandwiched between 2 RuvA tetramers; dsDNA enters through RuvA and exits via RuvB. An RuvB hexamer assembles on each DNA strand where it exits the tetramer. Each RuvB hexamer is contacted by two RuvA subunits (via domain III) on 2 adjacent RuvB subunits; this complex drives branch migration. In the full resolvosome a probable DNA-RuvA(4)-RuvB(12)-RuvC(2) complex forms which resolves the HJ.

The protein localises to the cytoplasm. Its function is as follows. The RuvA-RuvB-RuvC complex processes Holliday junction (HJ) DNA during genetic recombination and DNA repair, while the RuvA-RuvB complex plays an important role in the rescue of blocked DNA replication forks via replication fork reversal (RFR). RuvA specifically binds to HJ cruciform DNA, conferring on it an open structure. The RuvB hexamer acts as an ATP-dependent pump, pulling dsDNA into and through the RuvAB complex. HJ branch migration allows RuvC to scan DNA until it finds its consensus sequence, where it cleaves and resolves the cruciform DNA. This chain is Holliday junction branch migration complex subunit RuvA, found in Streptococcus pneumoniae (strain Hungary19A-6).